The sequence spans 217 residues: Glutathione S-transferase 1 (217 aa).

The GST N-terminal domain occupies 1–83 (MVMTLYKLDA…YLVSKYGADD (83 aa)). Glutathione is bound by residues serine 11, 53–55 (HTV), and 67–69 (DSH). The GST C-terminal domain occupies 89-211 (DPKKRAIVDQ…APGNDLCKDL (123 aa)).

It belongs to the GST superfamily. Theta family. In terms of assembly, homodimer.

It carries out the reaction RX + glutathione = an S-substituted glutathione + a halide anion + H(+). Conjugation of reduced glutathione to a wide number of exogenous and endogenous hydrophobic electrophiles. The protein is Glutathione S-transferase 1 (GST1) of Manduca sexta (Tobacco hawkmoth).